The primary structure comprises 848 residues: Leucine--tRNA ligase (848 aa).

Over residues 1–16 the composition is skewed to basic and acidic residues; sequence MCPEQPHDTRAERDEM. Residues 1–30 form a disordered region; the sequence is MCPEQPHDTRAERDEMSEQTQQAAQPAETA. The segment covering 18 to 30 has biased composition (low complexity); it reads EQTQQAAQPAETA. The short motif at 69-79 is the 'HIGH' region element; that stretch reads PYPSGDLHMGH. The 'KMSKS' region motif lies at 614-618; the sequence is KMSKS. Residue K617 coordinates ATP.

This sequence belongs to the class-I aminoacyl-tRNA synthetase family.

It localises to the cytoplasm. It carries out the reaction tRNA(Leu) + L-leucine + ATP = L-leucyl-tRNA(Leu) + AMP + diphosphate. The polypeptide is Leucine--tRNA ligase (Nocardioides sp. (strain ATCC BAA-499 / JS614)).